Consider the following 411-residue polypeptide: Phosphoglycerate kinase (411 aa).

Residues 22–24 (DFN), R37, 60–63 (HLSR), R123, and R165 each bind substrate. Residues K216, E339, and 366 to 369 (GGDS) contribute to the ATP site.

It belongs to the phosphoglycerate kinase family. In terms of assembly, monomer.

Its subcellular location is the cytoplasm. The catalysed reaction is (2R)-3-phosphoglycerate + ATP = (2R)-3-phospho-glyceroyl phosphate + ADP. It functions in the pathway carbohydrate degradation; glycolysis; pyruvate from D-glyceraldehyde 3-phosphate: step 2/5. The polypeptide is Phosphoglycerate kinase (pgk) (Mycoplasma genitalium (strain ATCC 33530 / DSM 19775 / NCTC 10195 / G37) (Mycoplasmoides genitalium)).